Reading from the N-terminus, the 420-residue chain is Tubulin epsilon and delta complex protein 1 (420 aa).

Residues 276-340 (SEGGLGELES…AVQQELAALQ (65 aa)) are a coiled coil. The span at 342–351 (SWEQSSTPGQ) shows a compositional bias: polar residues. Residues 342 to 369 (SWEQSSTPGQPQRPHRLVRSKDGAPRPQ) form a disordered region. A coiled-coil region spans residues 377–409 (IRTLSAKEACLKKALHQLQRQCQQELARLAGAL).

In terms of assembly, interacts with TEDC2. Found in a complex with TEDC1, TEDC2, TUBE1 and TUBD1.

The protein resides in the cell projection. It localises to the cilium. The protein localises to the cytoplasm. It is found in the cytoskeleton. Its subcellular location is the microtubule organizing center. The protein resides in the centrosome. It localises to the centriole. Its function is as follows. Acts as a positive regulator of ciliary hedgehog signaling. Required for centriole stability. May play a role in counteracting perturbation of actin filaments, such as after treatment with the actin depolymerizing microbial metabolite Chivosazole F. This is Tubulin epsilon and delta complex protein 1 from Mus musculus (Mouse).